Consider the following 139-residue polypeptide: METDYNPVELSSMSGFEEGSELNGFEGADMKDMQLEAEAVVNDVLFAVNHMFVSKSMPCADDVAYINVETKERNRYCLELTEAGLRVVGYAFDQVEDHLQTPYHETVYSLLDTLSPAYREAFGNALLQRLEALKRDGQS.

A required for PRKAR2A interaction; contributes to a protective effect against H(2)O(2)-induced apoptosis region spans residues 41-45; it reads VNDVL. Residues 115–139 form an interaction with GSK3B and acts as a GSK3B inhibitor region; that stretch reads SPAYREAFGNALLQRLEALKRDGQS.

Belongs to the GSKIP family. As to quaternary structure, forms a complex composed of PRKAR2A or PRKAR2B, GSK3B and GSKIP through GSKIP interaction; facilitates PKA-induced phosphorylation of GSK3B leading to GSK3B inactivation; recruits DNM1L through GSK3B for PKA-mediated phosphorylation of DNM1L; promotes beta-catenin degradation through GSK3B-induced phosphorylation of beta-catenin; stabilizes beta-catenin and enhances Wnt-induced signaling through PKA-induced phosphorylation of beta-catenin. Interacts with GSK3B; induces GSK3B-mediated phosphorylation of GSKIP and inhibits GSK3B kinase activity. In terms of processing, phosphorylated by GSK3B.

It localises to the cytoplasm. The protein localises to the nucleus. A-kinase anchoring protein for GSK3B and PKA that regulates or facilitates their kinase activity towards their targets. The ternary complex enhances Wnt-induced signaling by facilitating the GSK3B- and PKA-induced phosphorylation of beta-catenin leading to beta-catenin degradation and stabilization respectively. Upon cAMP activation, the ternary complex contributes to neuroprotection against oxidative stress-induced apoptosis by facilitating the PKA-induced phosphorylation of DML1 and PKA-induced inactivation of GSK3B. During neurite outgrowth promotes neuron proliferation; while increases beta-catenin-induced transcriptional activity through GSK3B kinase activity inhibition, reduces N-cadherin level to promote cell cycle progression. May play a role in cleft palate formation and is required for postnatal life through modulation of the activity of GSK3B during development. The protein is GSK3B-interacting protein of Mus musculus (Mouse).